Consider the following 65-residue polypeptide: MEVSQAASGTDGVRERRGSFEAGRRNQDEAPQSGMNGLPKHSYWLDLWLFILFDLALFVFVYLLP.

At M1 the chain carries N-acetylmethionine. Residues 1–36 are disordered; the sequence is MEVSQAASGTDGVRERRGSFEAGRRNQDEAPQSGMN. Residues 12–28 are compositionally biased toward basic and acidic residues; sequence GVRERRGSFEAGRRNQD. S19 bears the Phosphoserine mark. A helical transmembrane segment spans residues 44 to 64; it reads WLDLWLFILFDLALFVFVYLL.

As to quaternary structure, homooligomer. Can also form heterooligomers with other sarcoplasmic/endoplasmic reticulum calcium ATPase (SERCA) regulators ERLN, PLN, SLN and STRIT1/DWORF. Monomer. Interacts as a monomer with ATP2A2/SERCA2; the interaction results in inhibition of ATP2A2 Ca(2+) affinity. In terms of tissue distribution, in the embryo, expressed in heart, epidermal epithelium, salivary gland, brown fat, intestinal epithelium and bladder urothelium.

Its subcellular location is the endoplasmic reticulum membrane. Inhibits the activity of the calcium ATPases ATP2A2/SERCA2 and ATP2A3/SERCA3 by decreasing their apparent affinity for Ca(2+). This is Sarcoplasmic/endoplasmic reticulum calcium ATPase regulator ARLN (Arln) from Mus musculus (Mouse).